A 157-amino-acid chain; its full sequence is Transcription elongation factor GreA (157 aa).

This sequence belongs to the GreA/GreB family.

Functionally, necessary for efficient RNA polymerase transcription elongation past template-encoded arresting sites. The arresting sites in DNA have the property of trapping a certain fraction of elongating RNA polymerases that pass through, resulting in locked ternary complexes. Cleavage of the nascent transcript by cleavage factors such as GreA or GreB allows the resumption of elongation from the new 3'terminus. GreA releases sequences of 2 to 3 nucleotides. The chain is Transcription elongation factor GreA from Caulobacter vibrioides (strain ATCC 19089 / CIP 103742 / CB 15) (Caulobacter crescentus).